The sequence spans 1670 residues: MSARTAPRPQVLLLPLLLVLLAAAPAASKGCVCKDKGQCFCDGAKGEKGEKGFPGPPGSPGQKGFTGPEGLPGPQGPKGFPGLPGLTGSKGVRGISGLPGFSGSPGLPGTPGNTGPYGLVGVPGCSGSKGEQGFPGLPGTLGYPGIPGAAGLKGQKGAPAKEEDIELDAKGDPGLPGAPGPQGLPGPPGFPGPVGPPGPPGFFGFPGAMGPRGPKGHMGERVIGHKGERGVKGLTGPPGPPGTVIVTLTGPDNRTDLKGEKGDKGAMGEPGPPGPSGLPGESYGSEKGAPGDPGLQGKPGKDGVPGFPGSEGVKGNRGFPGLMGEDGIKGQKGDIGPPGFRGPTEYYDTYQEKGDEGTPGPPGPRGARGPQGPSGPPGVPGSPGSSRPGLRGAPGWPGLKGSKGERGRPGKDAMGTPGSPGCAGSPGLPGSPGPPGPPGDIVFRKGPPGDHGLPGYLGSPGIPGVDGPKGEPGLLCTQCPYIPGPPGLPGLPGLHGVKGIPGRQGAAGLKGSPGSPGNTGLPGFPGFPGAQGDPGLKGEKGETLQPEGQVGVPGDPGLRGQPGRKGLDGIPGTPGVKGLPGPKGELALSGEKGDQGPPGDPGSPGSPGPAGPAGPPGYGPQGEPGLQGTQGVPGAPGPPGEAGPRGELSVSTPVPGPPGPPGPPGHPGPQGPPGIPGSLGKCGDPGLPGPDGEPGIPGIGFPGPPGPKGDQGFPGTKGSLGCPGKMGEPGLPGKPGLPGAKGEPAVAMPGGPGTPGFPGERGNSGEHGEIGLPGLPGLPGTPGNEGLDGPRGDPGQPGPPGEQGPPGRCIEGPRGAQGLPGLNGLKGQQGRRGKTGPKGDPGIPGLDRSGFPGETGSPGIPGHQGEMGPLGQRGYPGNPGILGPPGEDGVIGMMGFPGAIGPPGPPGNPGTPGQRGSPGIPGVKGQRGTPGAKGEQGDKGNPGPSEISHVIGDKGEPGLKGFAGNPGEKGNRGVPGMPGLKGLKGLPGPAGPPGPRGDLGSTGNPGEPGLRGIPGSMGNMGMPGSKGKRGTLGFPGRAGRPGLPGIHGLQGDKGEPGYSEGTRPGPPGPTGDPGLPGDMGKKGEMGQPGPPGHLGPAGPEGAPGSPGSPGLPGKPGPHGDLGFKGIKGLLGPPGIRGPPGLPGFPGSPGPMGIRGDQGRDGIPGPAGEKGETGLLRAPPGPRGNPGAQGAKGDRGAPGFPGLPGRKGAMGDAGPRGPTGIEGFPGPPGLPGAIIPGQTGNRGPPGSRGSPGAPGPPGPPGSHVIGIKGDKGSMGHPGPKGPPGTAGDMGPPGRLGAPGTPGLPGPRGDPGFQGFPGVKGEKGNPGFLGSIGPPGPIGPKGPPGVRGDPGTLKIISLPGSPGPPGTPGEPGMQGEPGPPGPPGNLGPCGPRGKPGKDGKPGTPGPAGEKGNKGSKGEPGPAGSDGLPGLKGKRGDSGSPATWTTRGFVFTRHSQTTAIPSCPEGTVPLYSGFSFLFVQGNQRAHGQDLGTLGSCLQRFTTMPFLFCNVNDVCNFASRNDYSYWLSTPALMPMNMAPITGRALEPYISRCTVCEGPAIAIAVHSQTTDIPPCPHGWISLWKGFSFIMFTSAGSEGTGQALASPGSCLEEFRASPFLECHGRGTCNYYSNSYSFWLASLNPERMFRKPIPSTVKAGELEKIISRCQVCMKKRH.

An N-terminal signal peptide occupies residues 1–28 (MSARTAPRPQVLLLPLLLVLLAAAPAAS). Residues 29-42 (KGCVCKDKGQCFCD) are 7S domain. The interval 43 to 1438 (GAKGEKGEKG…KGKRGDSGSP (1396 aa)) is triple-helical region. Disordered stretches follow at residues 49–78 (GEKGFPGPPGSPGQKGFTGPEGLPGPQGPK), 167–469 (LDAK…DGPK), and 502–1442 (GRQG…ATWT). A compositionally biased stretch (pro residues) spans 176–200 (PGAPGPQGLPGPPGFPGPVGPPGPP). The segment covering 202–212 (FFGFPGAMGPR) has biased composition (low complexity). Over residues 217-231 (HMGERVIGHKGERGV) the composition is skewed to basic and acidic residues. A compositionally biased stretch (low complexity) spans 242 to 251 (GTVIVTLTGP). N-linked (GlcNAc...) asparagine glycosylation is present at asparagine 253. A compositionally biased stretch (basic and acidic residues) spans 253–266 (NRTDLKGEKGDKGA). Positions 382 to 394 (SPGSSRPGLRGAP) are enriched in low complexity. Residues 402–411 (SKGERGRPGK) are compositionally biased toward basic and acidic residues. The span at 415 to 428 (GTPGSPGCAGSPGL) shows a compositional bias: low complexity. 3 stretches are compositionally biased toward pro residues: residues 429-438 (PGSPGPPGPP), 598-618 (PGDPGSPGSPGPAGPAGPPGY), and 654-675 (VPGPPGPPGPPGHPGPQGPPGI). A Cell attachment site motif is present at residues 791 to 793 (RGD). A compositionally biased stretch (pro residues) spans 900–909 (IGPPGPPGNP). Over residues 974–987 (VPGMPGLKGLKGLP) the composition is skewed to low complexity. The Cell attachment site signature appears at 996-998 (RGD). Composition is skewed to low complexity over residues 1013 to 1025 (IPGSMGNMGMPGS), 1094 to 1105 (LGPAGPEGAPGS), and 1118 to 1133 (HGDLGFKGIKGLLGPP). The segment covering 1135–1148 (IRGPPGLPGFPGSP) has biased composition (pro residues). A Cell attachment site motif is present at residues 1154–1156 (RGD). Composition is skewed to low complexity over residues 1230-1250 (PGAIIPGQTGNRGPPGSRGSP) and 1290-1299 (PPGRLGAPGT). Residues 1306 to 1308 (RGD) carry the Cell attachment site motif. Over residues 1332 to 1341 (PPGPIGPKGP) the composition is skewed to pro residues. 2 short sequence motifs (cell attachment site) span residues 1345–1347 (RGD) and 1432–1434 (RGD). Positions 1427–1444 (GLKGKRGDSGSPATWTTR) are epitope recognized by Goodpasture antibodies. Residues 1445 to 1669 (GFVFTRHSQT…SRCQVCMKKR (225 aa)) form the Collagen IV NC1 domain. Intrachain disulfides connect cysteine 1460–cysteine 1551, cysteine 1493–cysteine 1548, cysteine 1505–cysteine 1511, cysteine 1570–cysteine 1665, cysteine 1604–cysteine 1662, and cysteine 1616–cysteine 1622. Residues 1479–1557 (NQRAHGQDLG…CTVCEGPAIA (79 aa)) are required for the anti-angiogenic activity of tumstatin. Residue methionine 1533 forms an S-Lysyl-methionine sulfilimine (Met-Lys) (interchain with K-1651) linkage. The required for the anti-tumor cell activity of tumstatin stretch occupies residues 1610-1628 (ASPFLECHGRGTCNYYSNS). An S-Lysyl-methionine sulfilimine (Lys-Met) (interchain with M-1533) cross-link involves residue lysine 1651.

Belongs to the type IV collagen family. As to quaternary structure, there are six type IV collagen isoforms, alpha 1(IV)-alpha 6(IV), each of which can form a triple helix structure with 2 other chains to generate type IV collagen network. The alpha 3(IV) chain forms a triple helical protomer with alpha 4(IV) and alpha 5(IV); this triple helical structure dimerizes through NC1-NC1 domain interactions such that the alpha 3(IV), alpha 4(IV) and alpha 5(IV) chains of one protomer connect with the alpha 5(IV), alpha 4(IV) and alpha 3(IV) chains of the opposite promoter, respectively. Interacts with ITGB3. Associates with LAMB2 at the neuromuscular junction and in GBM. Post-translationally, prolines at the third position of the tripeptide repeating unit (G-X-Y) are hydroxylated in some or all of the chains. In terms of processing, isoform 2 contains an additional N-linked glycosylation site. Type IV collagens contain numerous cysteine residues which are involved in inter- and intramolecular disulfide bonding. 12 of these, located in the NC1 domain, are conserved in all known type IV collagens. Post-translationally, the trimeric structure of the NC1 domains is stabilized by covalent bonds between Lys and Met residues. In terms of processing, phosphorylated. Thought to be phosphorylated by CERT, but CERT does not have kinase activity. In terms of tissue distribution, alpha 3 and alpha 4 type IV collagens are colocalized and present in kidney, eye, basement membranes of lens capsule, cochlea, lung, skeletal muscle, aorta, synaptic fibers, fetal kidney and fetal lung. PubMed:8083201 reports similar levels of expression of alpha 3 and alpha 4 type IV collagens in kidney, but PubMed:7523402 reports that in kidney levels of alpha 3 type IV collagen are significantly lower than those of alpha 4 type IV collagen. According to PubMed:8083201, alpha 3 type IV collagen is not detected in heart, brain, placenta, liver, pancreas, extrasynaptic muscle fibers, endoneurial and perineurial nerves, fetal brain, fetal heart and fetal liver. According to PubMed:7523402, alpha 3 type IV collagen is strongly expressed in pancreas, neuroretina and calvaria and not expressed in adrenal, ileum and skin. Isoform 1 and isoform 3 are strongly expressed in kidney, lung, suprarenal capsule, muscle and spleen, in each of these tissues isoform 1 is more abundant than isoform 3. Isoform 1 and isoform 3 are expressed at low levels in artery, fat, pericardium and peripherical nerve, but not in placenta, mesangium, skin, pleura and cultured umbilical endothelial cells.

It is found in the secreted. Its subcellular location is the extracellular space. The protein resides in the extracellular matrix. The protein localises to the basement membrane. Its function is as follows. Type IV collagen is the major structural component of glomerular basement membranes (GBM), forming a 'chicken-wire' meshwork together with laminins, proteoglycans and entactin/nidogen. In terms of biological role, tumstatin, a cleavage fragment corresponding to the collagen alpha 3(IV) NC1 domain, possesses both anti-angiogenic and anti-tumor cell activity; these two anti-tumor properties may be regulated via RGD-independent ITGB3-mediated mechanisms. The sequence is that of Collagen alpha-3(IV) chain (COL4A3) from Homo sapiens (Human).